Here is a 349-residue protein sequence, read N- to C-terminus: 4-hydroxythreonine-4-phosphate dehydrogenase (349 aa).

T135 contributes to the substrate binding site. H170, H215, and H276 together coordinate a divalent metal cation. Residues K284, N293, and R302 each contribute to the substrate site.

It belongs to the PdxA family. Homodimer. Requires a divalent metal cation as cofactor.

Its subcellular location is the cytoplasm. The enzyme catalyses 4-(phosphooxy)-L-threonine + NAD(+) = 3-amino-2-oxopropyl phosphate + CO2 + NADH. The protein operates within cofactor biosynthesis; pyridoxine 5'-phosphate biosynthesis; pyridoxine 5'-phosphate from D-erythrose 4-phosphate: step 4/5. Its function is as follows. Catalyzes the NAD(P)-dependent oxidation of 4-(phosphooxy)-L-threonine (HTP) into 2-amino-3-oxo-4-(phosphooxy)butyric acid which spontaneously decarboxylates to form 3-amino-2-oxopropyl phosphate (AHAP). This Synechococcus sp. (strain JA-3-3Ab) (Cyanobacteria bacterium Yellowstone A-Prime) protein is 4-hydroxythreonine-4-phosphate dehydrogenase.